We begin with the raw amino-acid sequence, 196 residues long: Molybdopterin synthase catalytic subunit (196 aa).

The tract at residues 1–29 is disordered; it reads MSTLPSTDPPPLPASTSSQQPAVHIPPPS. Residues 145 to 146, Lys161, and 168 to 170 each bind substrate; these read HR and KRE. Positions 174-196 are disordered; sequence GEPPGQGEWRANRDTDPEGKSTS. The span at 183–196 shows a compositional bias: basic and acidic residues; sequence RANRDTDPEGKSTS.

Belongs to the MoaE family. MOCS2B subfamily. In terms of assembly, heterotetramer; composed of 2 small (MOCS2A) and 2 large (MOCS2B) subunits.

The protein resides in the cytoplasm. It carries out the reaction 2 [molybdopterin-synthase sulfur-carrier protein]-C-terminal-Gly-aminoethanethioate + cyclic pyranopterin phosphate + H2O = molybdopterin + 2 [molybdopterin-synthase sulfur-carrier protein]-C-terminal Gly-Gly + 2 H(+). It participates in cofactor biosynthesis; molybdopterin biosynthesis. Functionally, catalytic subunit of the molybdopterin synthase complex, a complex that catalyzes the conversion of precursor Z into molybdopterin. Acts by mediating the incorporation of 2 sulfur atoms from thiocarboxylated MOCS2A into precursor Z to generate a dithiolene group. The sequence is that of Molybdopterin synthase catalytic subunit from Coccidioides immitis (strain RS) (Valley fever fungus).